We begin with the raw amino-acid sequence, 209 residues long: V-type ATP synthase subunit D 2 (209 aa).

The protein belongs to the V-ATPase D subunit family.

Functionally, produces ATP from ADP in the presence of a proton gradient across the membrane. The polypeptide is V-type ATP synthase subunit D 2 (atpD2) (Treponema pallidum (strain Nichols)).